We begin with the raw amino-acid sequence, 100 residues long: MGALTKAEIAERLYEELGLNKREAKELVELFFEEIRQALEHNEQVKLSGFGNFDLRDKRQRPGRNPKTGEEIPITARRVVTFRPGQKLKARVEAYAGTKS.

The interval 54–73 (DLRDKRQRPGRNPKTGEEIP) is disordered.

The protein belongs to the bacterial histone-like protein family. Heterodimer of an alpha and a beta chain.

Functionally, this protein is one of the two subunits of integration host factor, a specific DNA-binding protein that functions in genetic recombination as well as in transcriptional and translational control. The protein is Integration host factor subunit alpha of Pseudomonas aeruginosa (strain UCBPP-PA14).